A 499-amino-acid chain; its full sequence is MIKIFTALFFGSLNVISFSPYNFWPASIISIFGLLIITTNCKNLINSAKLGFLWGIGNFFNEIYWIYISINKFFGINLFFSIIIILLLSSYLSLYPTIFVILTKFFFPKINFFLFCVGAPSAWMISEILRSKILTGFPWLEIGYSQINGPLKGLAPIIGVSGISYILIIISGMCVLSFYKKSYYPIIFIIFIITLTYPLNFFKWYSVKEKSTKIALIQGNISQHTYIDNNQIQKNLEQYLKITKKIINSSNIIIWPESAIPCDEISCRNFLLKIDKELKLKKSYLITGIISLKKSNYYNSIITLGGNSPYLDNSKNKYYKYNLVPFGEKLPLKSILNPIFNKLGLSLIDLKKGDFFQNQLKIFDFNIVPSICYEIIFGDRIRKNVKINTDFLLTISNDSWFGDSIGPWQHFNMARMRALETGKNLLRASNNGITAIIGPNGELKSKLPQFVNDFLLEEVFSTMGVTPYVKFGNIPLLFFSIICFIISFFIKIKLIFLKN.

Helical transmembrane passes span 18–38 (FSPY…LIIT), 50–70 (LGFL…YISI), 82–102 (IIII…FVIL), 105–125 (FFFP…AWMI), 156–176 (PIIG…MCVL), and 182–202 (SYYP…LNFF). The CN hydrolase domain occupies 217-461 (IQGNISQHTY…NDFLLEEVFS (245 aa)). E257 (proton acceptor) is an active-site residue. The active site involves K320. C372 (nucleophile) is an active-site residue. Residues 476 to 496 (LLFFSIICFIISFFIKIKLIF) form a helical membrane-spanning segment.

It belongs to the CN hydrolase family. Apolipoprotein N-acyltransferase subfamily.

Its subcellular location is the cell membrane. It carries out the reaction N-terminal S-1,2-diacyl-sn-glyceryl-L-cysteinyl-[lipoprotein] + a glycerophospholipid = N-acyl-S-1,2-diacyl-sn-glyceryl-L-cysteinyl-[lipoprotein] + a 2-acyl-sn-glycero-3-phospholipid + H(+). Its pathway is protein modification; lipoprotein biosynthesis (N-acyl transfer). Functionally, catalyzes the phospholipid dependent N-acylation of the N-terminal cysteine of apolipoprotein, the last step in lipoprotein maturation. This Wigglesworthia glossinidia brevipalpis protein is Apolipoprotein N-acyltransferase.